Here is a 237-residue protein sequence, read N- to C-terminus: 7-cyano-7-deazaguanine synthase (237 aa).

9 to 19 (YSGGLDSTTCL) serves as a coordination point for ATP. 4 residues coordinate Zn(2+): cysteine 189, cysteine 199, cysteine 202, and cysteine 205.

The protein belongs to the QueC family. Requires Zn(2+) as cofactor.

The catalysed reaction is 7-carboxy-7-deazaguanine + NH4(+) + ATP = 7-cyano-7-deazaguanine + ADP + phosphate + H2O + H(+). The protein operates within purine metabolism; 7-cyano-7-deazaguanine biosynthesis. Functionally, catalyzes the ATP-dependent conversion of 7-carboxy-7-deazaguanine (CDG) to 7-cyano-7-deazaguanine (preQ(0)). This Geobacter metallireducens (strain ATCC 53774 / DSM 7210 / GS-15) protein is 7-cyano-7-deazaguanine synthase.